Reading from the N-terminus, the 156-residue chain is Small ribosomal subunit protein uS7c (156 aa).

It belongs to the universal ribosomal protein uS7 family. As to quaternary structure, part of the 30S ribosomal subunit.

Its subcellular location is the plastid. The protein resides in the chloroplast. Functionally, one of the primary rRNA binding proteins, it binds directly to 16S rRNA where it nucleates assembly of the head domain of the 30S subunit. This Tupiella akineta (Green alga) protein is Small ribosomal subunit protein uS7c (rps7).